We begin with the raw amino-acid sequence, 208 residues long: MSEEMQYEYLVPLEKYLSAGVRLGTRLSNKYLEDRGFIFAVRPDGLRIFDIKKIDERLKIAARFIARYPPDRVLVHTTRPYGFKPVQMFCKYVGCKALTGRFIPGTLTNPNLPHYQEADLLFVVDPKLDAQAVAEAAKMGVPVIALVDTDTPHQYIDFMIPCNNKGRKSLALIFWILARQVLRERGELKPDQDLPVPPEEFETRLVQT.

A disordered region spans residues 189 to 208; sequence KPDQDLPVPPEEFETRLVQT.

This sequence belongs to the universal ribosomal protein uS2 family.

This Pyrobaculum arsenaticum (strain DSM 13514 / JCM 11321 / PZ6) protein is Small ribosomal subunit protein uS2.